The sequence spans 234 residues: Endonuclease V (234 aa).

The Mg(2+) site is built by D36 and D104.

Belongs to the endonuclease V family. Mg(2+) serves as cofactor.

Its subcellular location is the cytoplasm. The catalysed reaction is Endonucleolytic cleavage at apurinic or apyrimidinic sites to products with a 5'-phosphate.. Its function is as follows. DNA repair enzyme involved in the repair of deaminated bases. Selectively cleaves double-stranded DNA at the second phosphodiester bond 3' to a deoxyinosine leaving behind the intact lesion on the nicked DNA. This chain is Endonuclease V, found in Yersinia pseudotuberculosis serotype O:1b (strain IP 31758).